Reading from the N-terminus, the 82-residue chain is MAKNLNTVSFTVLLLVLLMASTGILETEAACFKFLGECGAVPFPGTNADCTSCCVGNFGSAVCAGRVEVEGGVKHCHCYGTS.

The signal sequence occupies residues 1-29 (MAKNLNTVSFTVLLLVLLMASTGILETEA). Cystine bridges form between C38/C63, C50/C76, and C54/C78.

It belongs to the DEFL family.

Its subcellular location is the secreted. The polypeptide is Defensin-like protein 208 (Arabidopsis thaliana (Mouse-ear cress)).